A 482-amino-acid polypeptide reads, in one-letter code: ATP synthase subunit beta (482 aa).

161–168 (GGAGVGKT) serves as a coordination point for ATP.

The protein belongs to the ATPase alpha/beta chains family. F-type ATPases have 2 components, CF(1) - the catalytic core - and CF(0) - the membrane proton channel. CF(1) has five subunits: alpha(3), beta(3), gamma(1), delta(1), epsilon(1). CF(0) has three main subunits: a(1), b(2) and c(9-12). The alpha and beta chains form an alternating ring which encloses part of the gamma chain. CF(1) is attached to CF(0) by a central stalk formed by the gamma and epsilon chains, while a peripheral stalk is formed by the delta and b chains.

It localises to the cell inner membrane. The enzyme catalyses ATP + H2O + 4 H(+)(in) = ADP + phosphate + 5 H(+)(out). Functionally, produces ATP from ADP in the presence of a proton gradient across the membrane. The catalytic sites are hosted primarily by the beta subunits. The sequence is that of ATP synthase subunit beta from Anaeromyxobacter dehalogenans (strain 2CP-C).